A 276-amino-acid polypeptide reads, in one-letter code: Rhamnulose-1-phosphate aldolase (276 aa).

Residue Glu-117 is part of the active site. Zn(2+)-binding residues include His-141, His-143, and His-212.

The protein belongs to the aldolase class II family. RhaD subfamily. As to quaternary structure, homotetramer. Requires Zn(2+) as cofactor.

Its subcellular location is the cytoplasm. The catalysed reaction is L-rhamnulose 1-phosphate = (S)-lactaldehyde + dihydroxyacetone phosphate. The protein operates within carbohydrate degradation; L-rhamnose degradation; glycerone phosphate from L-rhamnose: step 3/3. Its function is as follows. Catalyzes the reversible cleavage of L-rhamnulose-1-phosphate to dihydroxyacetone phosphate (DHAP) and L-lactaldehyde. The protein is Rhamnulose-1-phosphate aldolase of Enterobacter sp. (strain 638).